A 590-amino-acid polypeptide reads, in one-letter code: O-fucosyltransferase 2 (590 aa).

Residues 1-16 (MGQERPNDEERPESRD) are compositionally biased toward basic and acidic residues. Residues 1 to 26 (MGQERPNDEERPESRDLGVYGCSPPH) are disordered. Residues 67–87 (TAIGVMAILGFFCLVNWFMLS) form a helical; Signal-anchor for type II membrane protein membrane-spanning segment. Asn-125 carries N-linked (GlcNAc...) asparagine glycosylation. 365–367 (HLR) is a binding site for substrate. N-linked (GlcNAc...) asparagine glycosylation is found at Asn-485 and Asn-546.

Belongs to the glycosyltransferase GT106 family.

Its subcellular location is the membrane. Its pathway is glycan metabolism. This Arabidopsis thaliana (Mouse-ear cress) protein is O-fucosyltransferase 2.